The primary structure comprises 318 residues: Cell surface sensor SHO1 (318 aa).

Positions 1–23 (MPSYGSLHSPSLRKMEHSRGQYG) are disordered. Residues 1–38 (MPSYGSLHSPSLRKMEHSRGQYGGGRKGMSLGNVIGDP) lie on the Cytoplasmic side of the membrane. A helical transmembrane segment spans residues 39 to 59 (FALATISIAGLAWLIAFIASI). The Extracellular segment spans residues 60–71 (VAQIQTTQGFPT). Residues 72–92 (YTWWTVVFYFFLIPGVFVVVA) form a helical membrane-spanning segment. Over 93 to 100 (SDTIQTYH) the chain is Cytoplasmic. The chain crosses the membrane as a helical span at residues 101 to 121 (VALVGYMACGLVLTTSSVNGL). Topologically, residues 122 to 130 (VYSTNGAKE) are extracellular. A helical transmembrane segment spans residues 131-151 (AAAAGFILLSMVTIVWIFYFG). Residues 152-318 (SAPSAMPRAY…IAPSNYLILL (167 aa)) are Cytoplasmic-facing. The tract at residues 172–255 (TSNNRQTMTG…AGGAADAEIV (84 aa)) is disordered. Polar residues predominate over residues 190–214 (ETSTSVQPPQMYTSAQLNGFENPSP). The segment covering 237-250 (GLPKTTTPPAGGAA) has biased composition (low complexity). The region spanning 259–318 (EYPYRAKAIYTYEANPDDANEISFSKHEILEVSDVSGRWWQARKETGETGIAPSNYLILL) is the SH3 domain.

The protein belongs to the SHO1 family. Forms homooligomers.

It localises to the cell membrane. Its function is as follows. MSB2 and SHO1 have overlapping functions in recognizing various surface signals for MAPK PMK1 activation and appressorium formation. While MSB2 is critical for sensing surface hydrophobicity and cutin monomers, SHO1 may play a more important role in recognizing rice leaf waxes. The sequence is that of Cell surface sensor SHO1 from Pyricularia oryzae (strain 70-15 / ATCC MYA-4617 / FGSC 8958) (Rice blast fungus).